Here is a 730-residue protein sequence, read N- to C-terminus: Catalase R (730 aa).

Histidine 105 is an active-site residue. Tyrosine 392 contributes to the heme binding site. The disordered stretch occupies residues 403–433 (PNFEQIPVNRPRKPVHNNNRDGFGQQQIPTN).

It belongs to the catalase family. Requires heme as cofactor.

It catalyses the reaction 2 H2O2 = O2 + 2 H2O. Its function is as follows. Occurs in almost all aerobically respiring organisms and serves to protect cells from the toxic effects of hydrogen peroxide. This Aspergillus niger protein is Catalase R (catR).